The chain runs to 164 residues: ATP synthase subunit b (164 aa).

The helical transmembrane segment at 7–25 (SFWLAVSFIIFVYLIYRPA) threads the bilayer.

It belongs to the ATPase B chain family. F-type ATPases have 2 components, F(1) - the catalytic core - and F(0) - the membrane proton channel. F(1) has five subunits: alpha(3), beta(3), gamma(1), delta(1), epsilon(1). F(0) has three main subunits: a(1), b(2) and c(10-14). The alpha and beta chains form an alternating ring which encloses part of the gamma chain. F(1) is attached to F(0) by a central stalk formed by the gamma and epsilon chains, while a peripheral stalk is formed by the delta and b chains.

The protein localises to the cell inner membrane. Its function is as follows. F(1)F(0) ATP synthase produces ATP from ADP in the presence of a proton or sodium gradient. F-type ATPases consist of two structural domains, F(1) containing the extramembraneous catalytic core and F(0) containing the membrane proton channel, linked together by a central stalk and a peripheral stalk. During catalysis, ATP synthesis in the catalytic domain of F(1) is coupled via a rotary mechanism of the central stalk subunits to proton translocation. In terms of biological role, component of the F(0) channel, it forms part of the peripheral stalk, linking F(1) to F(0). The polypeptide is ATP synthase subunit b (Rickettsia felis (strain ATCC VR-1525 / URRWXCal2) (Rickettsia azadi)).